Consider the following 237-residue polypeptide: MSNAYKRVLLKLSGEALMGDDAFGINRATIERMVADIAEVVRLGTQLAVVIGGGNIFRGVAGGAAGMDRATADYMGMLATMMNALALQDAMRHAGIEARVQSALRMDQVVEPYIRPRAIRQLEEGKVVIFAAGTGNPFFTTDTAAALRGSEVGAEVVLKATKVDGVYSADPKKDPSATRYSSISFDEAIGRNLQVMDATAFALCRDQKLPIRVFSINKPGALKRIVQGEDEGTLVHV.

11–14 contributes to the ATP binding site; sequence KLSG. Residue Gly53 participates in UMP binding. Positions 54 and 58 each coordinate ATP. UMP-binding positions include Asp73 and 134-141; that span reads TGNPFFTT. Residues Thr161, Tyr167, and Asp170 each coordinate ATP.

The protein belongs to the UMP kinase family. As to quaternary structure, homohexamer.

It is found in the cytoplasm. It carries out the reaction UMP + ATP = UDP + ADP. Its pathway is pyrimidine metabolism; CTP biosynthesis via de novo pathway; UDP from UMP (UMPK route): step 1/1. Its activity is regulated as follows. Inhibited by UTP. Functionally, catalyzes the reversible phosphorylation of UMP to UDP. The protein is Uridylate kinase of Burkholderia thailandensis (strain ATCC 700388 / DSM 13276 / CCUG 48851 / CIP 106301 / E264).